The chain runs to 513 residues: U3 small nucleolar RNA-associated protein 15 (513 aa).

WD repeat units lie at residues 37–78 (KEHN…KTFS), 79–118 (RFKD…TILL), 124–162 (THPT…EPQL), 166–206 (GATD…STPI), 210–247 (NHDQ…KLYE), and 250–294 (NFNK…QVKF). The tract at residues 332 to 354 (KKKEKRSSDKENAPASFNKNAKS) is disordered.

Interacts with snoRNA U3. Interacts with MPP10. Component of the ribosomal small subunit (SSU) processome composed of at least 40 protein subunits and snoRNA U3. In the absence of snoRNA3, forms a complex with other t-UTPs. This complex can associate with pre-18S ribosomal RNAs.

The protein resides in the nucleus. It localises to the nucleolus. In terms of biological role, involved in nucleolar processing of pre-18S ribosomal RNA. Required for optimal pre-ribosomal RNA transcription by RNA polymerase I together with a subset of U3 proteins required for transcription (t-UTPs). The sequence is that of U3 small nucleolar RNA-associated protein 15 (UTP15) from Saccharomyces cerevisiae (strain ATCC 204508 / S288c) (Baker's yeast).